The chain runs to 212 residues: uncharacterized protein (212 aa).

Residues 5-25 (IFIILIAVLLIGVNIKKIAAA) form a helical membrane-spanning segment.

The protein localises to the membrane. This is an uncharacterized protein from Borreliella burgdorferi (strain ATCC 35210 / DSM 4680 / CIP 102532 / B31) (Borrelia burgdorferi).